Here is a 526-residue protein sequence, read N- to C-terminus: Peptide chain release factor 3 (526 aa).

In terms of domain architecture, tr-type G spans 9 to 277; that stretch reads DKRRTFAIIS…GIVEWAPKPL (269 aa). Residues 18–25, 86–90, and 140–143 each bind GTP; these read SHPDAGKT, DTPGH, and NKLD.

This sequence belongs to the TRAFAC class translation factor GTPase superfamily. Classic translation factor GTPase family. PrfC subfamily.

The protein resides in the cytoplasm. Functionally, increases the formation of ribosomal termination complexes and stimulates activities of RF-1 and RF-2. It binds guanine nucleotides and has strong preference for UGA stop codons. It may interact directly with the ribosome. The stimulation of RF-1 and RF-2 is significantly reduced by GTP and GDP, but not by GMP. The chain is Peptide chain release factor 3 from Shewanella sp. (strain MR-4).